A 615-amino-acid chain; its full sequence is Sodium-dependent neutral amino acid transporter B(0)AT3 (615 aa).

Topologically, residues 1–26 (MAQASGMDPLVDIEDERPKWDNKLQY) are cytoplasmic. A helical transmembrane segment spans residues 27–47 (LLSCIGFAVGLGNIWRFPYLC). Over 48–52 (HTHGG) the chain is Extracellular. Residues 53 to 73 (GAFLIPYFIALVFEGIPLFYI) traverse the membrane as a helical segment. Over 74 to 105 (ELAIGQRLRRGSIGVWKTISPYLGGVGLGCFS) the chain is Cytoplasmic. Residues 106–126 (VSFLVSLYYNTILLWVLWFFL) form a helical membrane-spanning segment. Over 127-177 (NSFQHPLPWSTCPLDLNRTGFVQECQSSGTVSYFWYRQTLNITSDISNTGT) the chain is Extracellular. N-linked (GlcNAc...) asparagine glycosylation is found at Asn143 and Asn167. Residues 178–198 (IQWKLFLCLVACWTTVYLCVI) form a helical membrane-spanning segment. Residues 199–206 (RGIESTGK) lie on the Cytoplasmic side of the membrane. The chain crosses the membrane as a helical span at residues 207–227 (VIYFTALFPYLVLTIFLIRGL). Topologically, residues 228–255 (TLPGATEGLTYLFTPNMKILQNSRVWLD) are extracellular. A helical membrane pass occupies residues 256-276 (AATQIFFSLSLAFGGHIAFAS). The Cytoplasmic segment spans residues 277-290 (YNQPRNNCEKDAVT). A helical transmembrane segment spans residues 291-311 (IALVNSMTSLYASITIFSIMG). The Extracellular segment spans residues 312-397 (FKASNDYGRC…FTEAVLHMPG (86 aa)). The N-linked (GlcNAc...) asparagine glycan is linked to Asn353. A helical membrane pass occupies residues 398–418 (ASVWSVLFFGMLFTLGLSSMF). Residues 419–442 (GNMEGVITPLFDMGILPKGVPKET) are Cytoplasmic-facing. Residues 443–463 (MTGVVCFICFLSAICFTLQSG) traverse the membrane as a helical segment. At 464-472 (SYWLEIFDS) the chain is on the extracellular side. The chain crosses the membrane as a helical span at residues 473–493 (FAASLNLIIFAFMEVVGVIHV). The Cytoplasmic portion of the chain corresponds to 494–520 (YGIKRFCDDIEWMTGRRPSLYWQVTWR). The helical transmembrane segment at 521–541 (VVSPMLLFGIFLSYIVLLAQS) threads the bilayer. At 542–571 (SPSYKAWNPQYEHFPSREEKLYPGWVQVTC) the chain is on the extracellular side. A helical transmembrane segment spans residues 572 to 592 (VLLSFLPSLWVPGIALAQLLF). Residues 593-615 (QYRQRWKNTHLESALKPQESRGC) lie on the Cytoplasmic side of the membrane.

It belongs to the sodium:neurotransmitter symporter (SNF) (TC 2.A.22) family. SLC6A18 subfamily. Interacts with CLTRN; this interaction regulates the trafficking of SLC6A18 to the cell membrane and its activity. In terms of tissue distribution, kidney-specific expression.

Its subcellular location is the apical cell membrane. It localises to the cell membrane. The enzyme catalyses L-alanine(out) + chloride(out) + 2 Na(+)(out) = L-alanine(in) + chloride(in) + 2 Na(+)(in). It carries out the reaction glycine(out) + chloride(out) + 2 Na(+)(out) = glycine(in) + chloride(in) + 2 Na(+)(in). It catalyses the reaction L-methionine(out) + chloride(out) + 2 Na(+)(out) = L-methionine(in) + chloride(in) + 2 Na(+)(in). The catalysed reaction is L-valine(out) + chloride(out) + 2 Na(+)(out) = L-valine(in) + chloride(in) + 2 Na(+)(in). The enzyme catalyses L-isoleucine(out) + chloride(out) + 2 Na(+)(out) = L-isoleucine(in) + chloride(in) + 2 Na(+)(in). It carries out the reaction L-serine(out) + chloride(out) + 2 Na(+)(out) = L-serine(in) + chloride(in) + 2 Na(+)(in). It catalyses the reaction L-leucine(out) + chloride(out) + 2 Na(+)(out) = L-leucine(in) + chloride(in) + 2 Na(+)(in). Functionally, symporter that transports one amino acid molecule together with two sodium and one chloride ions in kidneys and plays a role in the neutral amino acids reabsorption. Preferentially transports neutral amino acids such as L-glycine and L-alanine but also other neutral amino acids. Required CLTRN for cell surface expression and for its amino acid transporter activity. The transport mechanism is pH-independent. In Rattus norvegicus (Rat), this protein is Sodium-dependent neutral amino acid transporter B(0)AT3.